A 258-amino-acid chain; its full sequence is NAD(P)H-hydrate epimerase (258 aa).

Residues Ala-15–Asp-244 form the YjeF N-terminal domain. Residue Asn-75–Asp-79 coordinates (6S)-NADPHX. K(+) is bound by residues Asn-76 and Asp-145. Residues Gly-149 to Pro-155 and Asp-181 each bind (6S)-NADPHX. Residue Ser-184 participates in K(+) binding.

This sequence belongs to the NnrE/AIBP family. The cofactor is K(+).

It localises to the cytoplasm. The protein resides in the mitochondrion. The enzyme catalyses (6R)-NADHX = (6S)-NADHX. It catalyses the reaction (6R)-NADPHX = (6S)-NADPHX. In terms of biological role, catalyzes the epimerization of the S- and R-forms of NAD(P)HX, a damaged form of NAD(P)H that is a result of enzymatic or heat-dependent hydration. This is a prerequisite for the S-specific NAD(P)H-hydrate dehydratase to allow the repair of both epimers of NAD(P)HX. The protein is NAD(P)H-hydrate epimerase of Candida albicans (strain SC5314 / ATCC MYA-2876) (Yeast).